Here is a 375-residue protein sequence, read N- to C-terminus: MKYITEGNTKLKIPEDATISKKDKIFYNPIMEVNRDISVSIVQSFLNKYDRDEFFICDPLGGSGARGLRYANELKINSGTGAPHITIGDINPNAISLAQENAKLNNLNNVNIVHKDANVLLSENFRKFNVVDIDPFGAPSPYLDSAIRSIITKNGILCMTATDTAVLYGSYRKTCIRNYDATPLKGNKELAIRLLVGHAIRMASKYDIGLKPIFSHFTAHYVRTFLMTERGAKKADEAVDKLGYVKNIEEEYIIKSRKEGNSDGFCGLYYLDNLTDENITKDAIKIAEERNYSKESVKVMKTVYEESLINNVGCYDVHKICKNIKKKVPPVDILMSGLNEMGFNACRTHHNPHSIKSDAKLIDIVEFIYKYDGNK.

Residues 2-368 (KYITEGNTKL…AKLIDIVEFI (367 aa)) enclose the Trm1 methyltransferase domain. S-adenosyl-L-methionine is bound by residues arginine 35, arginine 66, aspartate 89, aspartate 116, and alanine 117.

The protein belongs to the class I-like SAM-binding methyltransferase superfamily. Trm1 family.

It catalyses the reaction guanosine(26) in tRNA + 2 S-adenosyl-L-methionine = N(2)-dimethylguanosine(26) in tRNA + 2 S-adenosyl-L-homocysteine + 2 H(+). Dimethylates a single guanine residue at position 26 of a number of tRNAs using S-adenosyl-L-methionine as donor of the methyl groups. The protein is tRNA (guanine(26)-N(2))-dimethyltransferase of Methanococcus aeolicus (strain ATCC BAA-1280 / DSM 17508 / OCM 812 / Nankai-3).